Reading from the N-terminus, the 126-residue chain is Protein ApaG (126 aa).

In terms of domain architecture, ApaG spans 2–126 (SALDTSIRVE…FRLTTPGLLH (125 aa)).

This chain is Protein ApaG, found in Shewanella baltica (strain OS195).